The following is a 434-amino-acid chain: UPF0597 protein CLI_2075 (434 aa).

Belongs to the UPF0597 family.

In Clostridium botulinum (strain Langeland / NCTC 10281 / Type F), this protein is UPF0597 protein CLI_2075.